A 488-amino-acid polypeptide reads, in one-letter code: Probable malate:quinone oxidoreductase (488 aa).

It belongs to the MQO family. It depends on FAD as a cofactor.

It carries out the reaction (S)-malate + a quinone = a quinol + oxaloacetate. The protein operates within carbohydrate metabolism; tricarboxylic acid cycle; oxaloacetate from (S)-malate (quinone route): step 1/1. In Neisseria meningitidis serogroup A / serotype 4A (strain DSM 15465 / Z2491), this protein is Probable malate:quinone oxidoreductase.